The primary structure comprises 619 residues: Pentatricopeptide repeat-containing protein At1g68980, mitochondrial (619 aa).

A mitochondrion-targeting transit peptide spans 1-100; sequence MLRKTLTLIS…RAFVSTTYVI (100 aa). PPR repeat units follow at residues 186 to 221, 222 to 256, 257 to 292, 295 to 329, 366 to 400, 401 to 435, 436 to 466, 472 to 506, 507 to 541, and 542 to 576; these read DLVA…GVKP, DELS…GFAS, RRIL…GEAS, SEET…ESMS, GIGV…GLQL, DVET…RVAD, LKRC…VMED, KSHD…QYEP, NNQT…KAKL, and EHAL…KIFV.

The protein belongs to the PPR family. P subfamily.

Its subcellular location is the mitochondrion. The chain is Pentatricopeptide repeat-containing protein At1g68980, mitochondrial from Arabidopsis thaliana (Mouse-ear cress).